We begin with the raw amino-acid sequence, 393 residues long: Formate-dependent phosphoribosylglycinamide formyltransferase (393 aa).

N(1)-(5-phospho-beta-D-ribosyl)glycinamide is bound by residues 22–23 (EL) and E82. ATP-binding positions include R114, K155, 160-165 (SSGKGQ), 195-198 (EGFV), and E203. In terms of domain architecture, ATP-grasp spans 119–308 (RLAAEELGLV…EFALHVRAIL (190 aa)). Positions 267 and 279 each coordinate Mg(2+). N(1)-(5-phospho-beta-D-ribosyl)glycinamide-binding positions include D286, K356, and 363-364 (RR).

It belongs to the PurK/PurT family. Homodimer.

The catalysed reaction is N(1)-(5-phospho-beta-D-ribosyl)glycinamide + formate + ATP = N(2)-formyl-N(1)-(5-phospho-beta-D-ribosyl)glycinamide + ADP + phosphate + H(+). It participates in purine metabolism; IMP biosynthesis via de novo pathway; N(2)-formyl-N(1)-(5-phospho-D-ribosyl)glycinamide from N(1)-(5-phospho-D-ribosyl)glycinamide (formate route): step 1/1. In terms of biological role, involved in the de novo purine biosynthesis. Catalyzes the transfer of formate to 5-phospho-ribosyl-glycinamide (GAR), producing 5-phospho-ribosyl-N-formylglycinamide (FGAR). Formate is provided by PurU via hydrolysis of 10-formyl-tetrahydrofolate. The protein is Formate-dependent phosphoribosylglycinamide formyltransferase of Solidesulfovibrio magneticus (strain ATCC 700980 / DSM 13731 / RS-1) (Desulfovibrio magneticus).